Reading from the N-terminus, the 151-residue chain is Large ribosomal subunit protein uL15 (151 aa).

The tract at residues 1–60 (MAENNPLKIHNLRPAPGAKTAKTRVGRGEASKGKTAGRGTKGTKARYQVPERFEGGQMPL) is disordered.

This sequence belongs to the universal ribosomal protein uL15 family. In terms of assembly, part of the 50S ribosomal subunit.

Binds to the 23S rRNA. This Streptomyces coelicolor (strain ATCC BAA-471 / A3(2) / M145) protein is Large ribosomal subunit protein uL15.